A 496-amino-acid chain; its full sequence is Glycerol kinase (496 aa).

Thr-12 is a binding site for ADP. ATP is bound by residues Thr-12, Thr-13, and Ser-14. Thr-12 provides a ligand contact to sn-glycerol 3-phosphate. Arg-16 is a binding site for ADP. Residues Arg-82, Glu-83, and Tyr-134 each contribute to the sn-glycerol 3-phosphate site. Residues Arg-82, Glu-83, and Tyr-134 each contribute to the glycerol site. A Phosphohistidine; by HPr modification is found at His-230. Asp-244 serves as a coordination point for sn-glycerol 3-phosphate. Residues Asp-244 and Gln-245 each contribute to the glycerol site. Residues Thr-266 and Gly-309 each coordinate ADP. Positions 266, 309, 313, and 410 each coordinate ATP. Gly-410 and Asn-414 together coordinate ADP.

Belongs to the FGGY kinase family. As to quaternary structure, homotetramer and homodimer (in equilibrium). Post-translationally, the phosphoenolpyruvate-dependent sugar phosphotransferase system (PTS), including enzyme I, and histidine-containing protein (HPr) are required for the phosphorylation, which leads to the activation of the enzyme.

It catalyses the reaction glycerol + ATP = sn-glycerol 3-phosphate + ADP + H(+). Its pathway is polyol metabolism; glycerol degradation via glycerol kinase pathway; sn-glycerol 3-phosphate from glycerol: step 1/1. Activated by phosphorylation and inhibited by fructose 1,6-bisphosphate (FBP). Functionally, key enzyme in the regulation of glycerol uptake and metabolism. Catalyzes the phosphorylation of glycerol to yield sn-glycerol 3-phosphate. This Bacillus mycoides (strain KBAB4) (Bacillus weihenstephanensis) protein is Glycerol kinase.